A 163-amino-acid chain; its full sequence is ATP synthase subunit b', chloroplastic (163 aa).

The helical transmembrane segment at 26 to 46 threads the bilayer; the sequence is ATLPLMALQFILLTVILTFVF.

The protein belongs to the ATPase B chain family. In terms of assembly, F-type ATPases have 2 components, F(1) - the catalytic core - and F(0) - the membrane proton channel. F(1) has five subunits: alpha(3), beta(3), gamma(1), delta(1), epsilon(1). F(0) has four main subunits: a(1), b(1), b'(1) and c(10-14). The alpha and beta chains form an alternating ring which encloses part of the gamma chain. F(1) is attached to F(0) by a central stalk formed by the gamma and epsilon chains, while a peripheral stalk is formed by the delta, b and b' chains.

The protein resides in the plastid. The protein localises to the chloroplast thylakoid membrane. Functionally, f(1)F(0) ATP synthase produces ATP from ADP in the presence of a proton or sodium gradient. F-type ATPases consist of two structural domains, F(1) containing the extramembraneous catalytic core and F(0) containing the membrane proton channel, linked together by a central stalk and a peripheral stalk. During catalysis, ATP synthesis in the catalytic domain of F(1) is coupled via a rotary mechanism of the central stalk subunits to proton translocation. Its function is as follows. Component of the F(0) channel, it forms part of the peripheral stalk, linking F(1) to F(0). The b'-subunit is a diverged and duplicated form of b found in plants and photosynthetic bacteria. The protein is ATP synthase subunit b', chloroplastic of Ochrosphaera neapolitana.